The sequence spans 283 residues: Phosphatidylglycerol--prolipoprotein diacylglyceryl transferase (283 aa).

Helical transmembrane passes span 14-34 (LGPL…ALFL), 56-76 (MLMY…VLFY), and 88-108 (IFMV…VLIA). Arg139 is an a 1,2-diacyl-sn-glycero-3-phospho-(1'-sn-glycerol) binding site. The helical transmembrane segment at 258-278 (MGQWLSLPMIVIGVALLVFFG) threads the bilayer.

It belongs to the Lgt family.

Its subcellular location is the cell inner membrane. It catalyses the reaction L-cysteinyl-[prolipoprotein] + a 1,2-diacyl-sn-glycero-3-phospho-(1'-sn-glycerol) = an S-1,2-diacyl-sn-glyceryl-L-cysteinyl-[prolipoprotein] + sn-glycerol 1-phosphate + H(+). The protein operates within protein modification; lipoprotein biosynthesis (diacylglyceryl transfer). Its function is as follows. Catalyzes the transfer of the diacylglyceryl group from phosphatidylglycerol to the sulfhydryl group of the N-terminal cysteine of a prolipoprotein, the first step in the formation of mature lipoproteins. In Chromobacterium violaceum (strain ATCC 12472 / DSM 30191 / JCM 1249 / CCUG 213 / NBRC 12614 / NCIMB 9131 / NCTC 9757 / MK), this protein is Phosphatidylglycerol--prolipoprotein diacylglyceryl transferase.